The following is an 803-amino-acid chain: Leucine--tRNA ligase (803 aa).

The 'HIGH' region signature appears at 40–51 (PYPSGAGLHVGH). The short motif at 575-579 (KMSKS) is the 'KMSKS' region element. Residue Lys-578 coordinates ATP.

The protein belongs to the class-I aminoacyl-tRNA synthetase family.

It is found in the cytoplasm. It carries out the reaction tRNA(Leu) + L-leucine + ATP = L-leucyl-tRNA(Leu) + AMP + diphosphate. This Listeria monocytogenes serotype 4b (strain F2365) protein is Leucine--tRNA ligase.